Here is a 231-residue protein sequence, read N- to C-terminus: Biosynthetic peptidoglycan transglycosylase (231 aa).

The helical transmembrane segment at 7 to 27 (LLFWLIVVPVLLVLLLQLYFF) threads the bilayer.

Belongs to the glycosyltransferase 51 family.

Its subcellular location is the cell inner membrane. The enzyme catalyses [GlcNAc-(1-&gt;4)-Mur2Ac(oyl-L-Ala-gamma-D-Glu-L-Lys-D-Ala-D-Ala)](n)-di-trans,octa-cis-undecaprenyl diphosphate + beta-D-GlcNAc-(1-&gt;4)-Mur2Ac(oyl-L-Ala-gamma-D-Glu-L-Lys-D-Ala-D-Ala)-di-trans,octa-cis-undecaprenyl diphosphate = [GlcNAc-(1-&gt;4)-Mur2Ac(oyl-L-Ala-gamma-D-Glu-L-Lys-D-Ala-D-Ala)](n+1)-di-trans,octa-cis-undecaprenyl diphosphate + di-trans,octa-cis-undecaprenyl diphosphate + H(+). It functions in the pathway cell wall biogenesis; peptidoglycan biosynthesis. In terms of biological role, peptidoglycan polymerase that catalyzes glycan chain elongation from lipid-linked precursors. The protein is Biosynthetic peptidoglycan transglycosylase of Janthinobacterium sp. (strain Marseille) (Minibacterium massiliensis).